The primary structure comprises 371 residues: Homoserine O-acetyltransferase (371 aa).

The AB hydrolase-1 domain occupies 44–350 (NAILVEHAWT…SYGHDAFLLE (307 aa)). The Nucleophile role is filled by Ser-150. Arg-217 provides a ligand contact to substrate. Active-site residues include Asp-311 and His-344. Asp-345 lines the substrate pocket.

Belongs to the AB hydrolase superfamily. MetX family. As to quaternary structure, homodimer.

It is found in the cytoplasm. The catalysed reaction is L-homoserine + acetyl-CoA = O-acetyl-L-homoserine + CoA. The protein operates within amino-acid biosynthesis; L-methionine biosynthesis via de novo pathway; O-acetyl-L-homoserine from L-homoserine: step 1/1. Transfers an acetyl group from acetyl-CoA to L-homoserine, forming acetyl-L-homoserine. In Pelobacter propionicus (strain DSM 2379 / NBRC 103807 / OttBd1), this protein is Homoserine O-acetyltransferase.